Consider the following 144-residue polypeptide: Granulocyte-macrophage colony-stimulating factor (144 aa).

An N-terminal signal peptide occupies residues 1–17 (MWLQNLLFLGTVVCSIS). Ser22 is a glycosylation site (O-linked (GalNAc...) serine). Thr27 carries O-linked (GalNAc...) threonine glycosylation. N-linked (GlcNAc...) asparagine glycosylation is present at Asn44. 2 disulfide bridges follow: Cys71-Cys113 and Cys105-Cys138.

This sequence belongs to the GM-CSF family. Monomer. The signaling GM-CSF receptor complex is a dodecamer of two head-to-head hexamers of two alpha, two beta, and two ligand subunits.

It is found in the secreted. Its function is as follows. Cytokine that stimulates the growth and differentiation of hematopoietic precursor cells from various lineages, including granulocytes, macrophages, eosinophils and erythrocytes. The chain is Granulocyte-macrophage colony-stimulating factor (CSF2) from Canis lupus familiaris (Dog).